Consider the following 63-residue polypeptide: uncharacterized protein (63 aa).

The helical transmembrane segment at 37 to 57 threads the bilayer; sequence IFFPTTFDVLLLAILIFLACA.

It is found in the cell membrane. This is an uncharacterized protein from Bacillus subtilis (strain 168).